Here is a 606-residue protein sequence, read N- to C-terminus: Albumin A (606 aa).

An N-terminal signal peptide occupies residues 1–18; it reads MKWITLICLLISSTLIES. Residues 19–24 constitute a propeptide that is removed on maturation; the sequence is RIIFKR. 3 Albumin domains span residues 22 to 211, 212 to 401, and 402 to 599; these read FKRD…ELMK, HSHS…RFMN, and EAKE…VLIE. His30 is a binding site for Cu cation. 17 cysteine pairs are disulfide-bonded: Cys80–Cys89, Cys102–Cys118, Cys117–Cys128, Cys148–Cys193, Cys192–Cys201, Cys224–Cys270, Cys269–Cys277, Cys289–Cys303, Cys302–Cys313, Cys340–Cys383, Cys382–Cys391, Cys414–Cys460, Cys459–Cys470, Cys483–Cys499, Cys498–Cys509, Cys536–Cys581, and Cys580–Cys589.

It belongs to the ALB/AFP/VDB family. Plasma.

It localises to the secreted. Functionally, binds water, Ca(2+), Na(+), K(+), fatty acids, hormones, bilirubin and drugs. Its main function is the regulation of the colloidal osmotic pressure of blood. This Xenopus laevis (African clawed frog) protein is Albumin A (alb-a).